The sequence spans 110 residues: ATP synthase subunit c (110 aa).

3 consecutive transmembrane segments (helical) span residues 4 to 24, 37 to 57, and 81 to 101; these read FFVI…VFAA, ATAG…AGMG, and FIVG…FVLI.

Belongs to the ATPase C chain family. As to quaternary structure, F-type ATPases have 2 components, F(1) - the catalytic core - and F(0) - the membrane proton channel. F(1) has five subunits: alpha(3), beta(3), gamma(1), delta(1), epsilon(1). F(0) has three main subunits: a(1), b(2) and c(10-14). The alpha and beta chains form an alternating ring which encloses part of the gamma chain. F(1) is attached to F(0) by a central stalk formed by the gamma and epsilon chains, while a peripheral stalk is formed by the delta and b chains.

It localises to the cell inner membrane. F(1)F(0) ATP synthase produces ATP from ADP in the presence of a proton or sodium gradient. F-type ATPases consist of two structural domains, F(1) containing the extramembraneous catalytic core and F(0) containing the membrane proton channel, linked together by a central stalk and a peripheral stalk. During catalysis, ATP synthesis in the catalytic domain of F(1) is coupled via a rotary mechanism of the central stalk subunits to proton translocation. Functionally, key component of the F(0) channel; it plays a direct role in translocation across the membrane. A homomeric c-ring of between 10-14 subunits forms the central stalk rotor element with the F(1) delta and epsilon subunits. In Thermodesulfovibrio yellowstonii (strain ATCC 51303 / DSM 11347 / YP87), this protein is ATP synthase subunit c.